The sequence spans 274 residues: Large ribosomal subunit protein uL2 (274 aa).

The disordered stretch occupies residues 223 to 258 (VAMNPVDHPHGGGEGRTSGGRHPVTPWGIPTKGYKT).

It belongs to the universal ribosomal protein uL2 family. Part of the 50S ribosomal subunit. Forms a bridge to the 30S subunit in the 70S ribosome.

Its function is as follows. One of the primary rRNA binding proteins. Required for association of the 30S and 50S subunits to form the 70S ribosome, for tRNA binding and peptide bond formation. It has been suggested to have peptidyltransferase activity; this is somewhat controversial. Makes several contacts with the 16S rRNA in the 70S ribosome. In Pelobacter propionicus (strain DSM 2379 / NBRC 103807 / OttBd1), this protein is Large ribosomal subunit protein uL2.